Here is a 146-residue protein sequence, read N- to C-terminus: Large ribosomal subunit protein bL19 (146 aa).

It belongs to the bacterial ribosomal protein bL19 family.

In terms of biological role, this protein is located at the 30S-50S ribosomal subunit interface and may play a role in the structure and function of the aminoacyl-tRNA binding site. This Bartonella henselae (strain ATCC 49882 / DSM 28221 / CCUG 30454 / Houston 1) (Rochalimaea henselae) protein is Large ribosomal subunit protein bL19.